We begin with the raw amino-acid sequence, 400 residues long: Lysophospholipid transporter LplT (400 aa).

The next 12 helical transmembrane spans lie at 19-39 (VIVA…ATLA), 53-73 (VLQM…GQIA), 91-111 (AGAA…LVGI), 139-159 (LMEA…GVLA), 164-184 (IAAL…NLFI), 195-213 (SWRL…VVLW), 227-247 (LFWG…PVAL), 257-277 (YLNA…AKLV), 281-301 (TVSR…IFSL), 304-324 (ALLP…FFVV), 352-372 (NSAM…GVPA), and 373-393 (VAIG…LWIW).

Belongs to the major facilitator superfamily. LplT (TC 2.A.1.42) family.

The protein resides in the cell inner membrane. Its function is as follows. Catalyzes the facilitated diffusion of 2-acyl-glycero-3-phosphoethanolamine (2-acyl-GPE) into the cell. The chain is Lysophospholipid transporter LplT from Salmonella typhi.